The following is an 878-amino-acid chain: Leucine--tRNA ligase (878 aa).

The 'HIGH' region motif lies at 56 to 66 (PYPSGKLHMGH). Residues 630-634 (KMSKS) carry the 'KMSKS' region motif. Lys633 is a binding site for ATP.

It belongs to the class-I aminoacyl-tRNA synthetase family.

It is found in the cytoplasm. It carries out the reaction tRNA(Leu) + L-leucine + ATP = L-leucyl-tRNA(Leu) + AMP + diphosphate. The polypeptide is Leucine--tRNA ligase (Prochlorococcus marinus (strain MIT 9303)).